The sequence spans 420 residues: Transcription factor IIIB 50 kDa subunit (420 aa).

The TFIIB-type zinc-finger motif lies at 3-36 (NGSRCPDCGSSELVEDSHYSQSQLVCSDCGCVVT). 4 residues coordinate Zn(2+): cysteine 7, cysteine 10, cysteine 28, and cysteine 31. A run of 2 repeats spans residues 72-157 (DLRR…MQMV) and 173-249 (VKSY…SLAQ). The interaction with target DNA stretch occupies residues 108 to 114 (AARLQKK). The segment at 316–387 (TAEVETQQQQ…AVTGDEDISD (72 aa)) is disordered. Residues 322–336 (QQQQQQQQGQGQGQQ) are compositionally biased toward low complexity. Serine 354 is modified (phosphoserine). A required for the formation of a ternary complex with DNA and TBP; not required for interaction with TBP in the absence of DNA region spans residues 358–364 (LLPPCML). Cysteine sulfenic acid (-SOH) is present on cysteine 362. A required for interaction with TBP and formation of a ternary complex with DNA and TBP region spans residues 366 to 420 (PPKRTHTLPPESAVTGDEDISDSEIEQYLRTPQEVRDFERAQAASQAAMRVPNPP).

This sequence belongs to the TFIIB family. As to quaternary structure, component of TFIIIB complexes. The TFIIIB complex has two activities, alpha and beta. The TFIIIB-alpha activity complex is composed of TBP, BDP1, and a complex containing both BRF2 and at least four stably associated proteins; this complex inhibits the transcription by pol III via its phosphorylation by CK2; YY1 facilitates the TFIIIB-alpha complex formation. Interacts with TBP; this interaction promotes recruitment of BRF2 to TATA box-containing promoters. Interacts with TBP and the BURE sequence (GC-rich sequence downstream from the TATA box) to form a strong ternary complex which is joined by BDP1; this ternary complex stimulates pol III transcription. Forms a trimeric complex composed of TBP, BRF2 and mini-SNAPc complex (SNAP43, SNAP50, and the N-terminal third of SNAP190) on the promoter. Assembly of the TBP-BRF2 complex is stimulated by SNAP190. Interacts with MAF1 and SNAPC4. In response to oxidative stress, Cys-362 is reversibly oxidized to cysteine sulfenic acid. Oxidation of Cys-362 impairs formation of a ternary complex with TBP and DNA and down-regulates expression of target genes in response to oxidative stress.

The protein resides in the nucleus. In terms of biological role, general activator of RNA polymerase III transcription. Factor exclusively required for RNA polymerase III transcription of genes with promoter elements upstream of the initiation sites. Contributes to the regulation of gene expression; functions as activator in the absence of oxidative stress. Down-regulates expression of target genes in response to oxidative stress. Overexpression protects cells against apoptosis in response to oxidative stress. The protein is Transcription factor IIIB 50 kDa subunit (Brf2) of Mus musculus (Mouse).